The chain runs to 377 residues: GDP-mannose 3,5-epimerase (377 aa).

The residue at position 2 (Gly2) is an N-acetylglycine. NAD(+) is bound by residues 34–60, Asp58, and Asp78; that span reads GAGG…SDWK. Substrate-binding positions include Gly103 and 143–145; that span reads SAC. Tyr174 and Lys178 together coordinate NAD(+). The active-site Proton acceptor is Tyr174. Substrate-binding positions include Asn203, 216-218, Lys225, 241-243, Arg306, and Ser356; these read EKA and QTR. Position 369 is a phosphoserine (Ser369).

The protein belongs to the NAD(P)-dependent epimerase/dehydratase family. As to quaternary structure, homodimer. Interacts with chaperone Hsc70-3 protein, which may regulate epimerase activity. NAD(+) is required as a cofactor.

The enzyme catalyses GDP-alpha-D-mannose = GDP-beta-L-gulose. It carries out the reaction GDP-beta-L-gulose = GDP-beta-L-galactose. The protein operates within cofactor biosynthesis; L-ascorbate biosynthesis via GDP-alpha-D-mannose pathway; L-ascorbate from GDP-alpha-D-mannose: step 1/5. Inhibited by GDP and GDP-D-glucose. In terms of biological role, catalyzes a reversible epimerization of GDP-D-mannose that precedes the committed step in the biosynthesis of vitamin C (L-ascorbate), resulting in the hydrolysis of the highly energetic glycosyl-pyrophosphoryl linkage. Able to catalyze 2 distinct epimerization reactions and can release both GDP-L-galactose and GDP-L-gulose from GDP-mannose. This is GDP-mannose 3,5-epimerase from Arabidopsis thaliana (Mouse-ear cress).